A 399-amino-acid chain; its full sequence is Serine/threonine-protein kinase PknL (399 aa).

The Cytoplasmic portion of the chain corresponds to 1 to 368; the sequence is MVEAGTRDPL…FIWARQHARR (368 aa). Residues 19–278 enclose the Protein kinase domain; that stretch reads YLVQAKIASG…IAMGADLEAI (260 aa). ATP contacts are provided by residues 25–33 and Lys-48; that span reads IASGGTSTV. Phosphothreonine; by autocatalysis is present on Thr-32. Phosphothreonine; by autocatalysis is present on Thr-62. Asp-142 serves as the catalytic Proton acceptor. Phosphothreonine; by autocatalysis occurs at positions 173, 175, and 323. A disordered region spans residues 312–346; the sequence is GQLGAKPVHHPTRQLTRQPGDCSEPASGSEPEHEP. The helical transmembrane segment at 369-389 threads the bilayer; sequence MVLVWVSVVLAITGLVASAAW. The Extracellular segment spans residues 390 to 399; sequence TIGSNLSGLL.

It belongs to the protein kinase superfamily. Ser/Thr protein kinase family. In terms of processing, autophosphorylated. Thr-173 is required for autophosphorylation and transphosphorylation activities. Thr-175 is not necessary for autophosphorylation activity, but is required for full kinase activity.

It is found in the cell membrane. The enzyme catalyses L-seryl-[protein] + ATP = O-phospho-L-seryl-[protein] + ADP + H(+). The catalysed reaction is L-threonyl-[protein] + ATP = O-phospho-L-threonyl-[protein] + ADP + H(+). Its function is as follows. Phosphorylates the DNA-binding protein MT2231. May be involved in the regulation of cell division and cell envelope biosynthesis. In Mycobacterium tuberculosis (strain CDC 1551 / Oshkosh), this protein is Serine/threonine-protein kinase PknL (pknL).